A 73-amino-acid chain; its full sequence is Large ribosomal subunit protein bL31 (73 aa).

Cys16, Cys18, Cys37, and Cys40 together coordinate Zn(2+).

Belongs to the bacterial ribosomal protein bL31 family. Type A subfamily. As to quaternary structure, part of the 50S ribosomal subunit. The cofactor is Zn(2+).

In terms of biological role, binds the 23S rRNA. The protein is Large ribosomal subunit protein bL31 of Pseudomonas syringae pv. syringae (strain B728a).